Reading from the N-terminus, the 658-residue chain is Ubiquilin-3 (658 aa).

Positions 22-96 (IRVTVKTPKD…VHLVIKMQRR (75 aa)) constitute a Ubiquitin-like domain. An STI1 domain is found at 194 to 233 (NPHMQHLIQQNPEIGHILNNPEIMRQTMEFLRNPSMMQEM). The segment covering 280-291 (TATTASTTTTSS) has biased composition (low complexity). Disordered regions lie at residues 280-336 (TATT…RNRL) and 362-478 (YLQG…PESP). Gly residues predominate over residues 312–323 (VSGGRQGRGGRQ). 3 stretches are compositionally biased toward polar residues: residues 362–379 (YLQG…SPLS), 389–400 (SSPKSGSGQSLP), and 438–469 (TGPS…SLMS). The region spanning 614–658 (QLEAHFRVQLEQLRAMGFLNLEANLQALIATEGDVDAAVEKLRKS) is the UBA domain.

As to expression, testis-specific (at protein level).

The chain is Ubiquilin-3 (Ubqln3) from Mus musculus (Mouse).